Consider the following 141-residue polypeptide: Nucleoside diphosphate kinase (141 aa).

ATP contacts are provided by K11, F59, R87, T93, R104, and N114. Residue H117 is the Pros-phosphohistidine intermediate of the active site.

Belongs to the NDK family. Homotetramer. Requires Mg(2+) as cofactor.

Its subcellular location is the cytoplasm. It carries out the reaction a 2'-deoxyribonucleoside 5'-diphosphate + ATP = a 2'-deoxyribonucleoside 5'-triphosphate + ADP. It catalyses the reaction a ribonucleoside 5'-diphosphate + ATP = a ribonucleoside 5'-triphosphate + ADP. In terms of biological role, major role in the synthesis of nucleoside triphosphates other than ATP. The ATP gamma phosphate is transferred to the NDP beta phosphate via a ping-pong mechanism, using a phosphorylated active-site intermediate. This chain is Nucleoside diphosphate kinase, found in Variovorax paradoxus (strain S110).